The sequence spans 339 residues: MLILGIESSCDETGLALYDTERGLLAHALHSQIDMHAAYGGVVPELASRDHIRRTLPLTQHVLEQAGKSLADLDGIAYTQGPGLSGALLVGTSIAESLAFSLDLPTIGVHHLEGHLLAPLLEPDPPAFPFVALLVSGGHTQLMRVSAIGDYELLGDTLDDAAGEAFDKTAKLLGLSYPGGPAVSRLANQGQPGACQLPRPMLNSGDLNFSFSGLKTAVLTLVNQYGDALDETARANIAYEFQEAVTEVLTKKCMAALRNTGLNQLIVSGGVGANARLRERLNMAAKRRQYQVHYPRLEFCTDNGAMIAFAGAMRMQHAKQGNHSFTVRPRWDLAELNKP.

Fe cation is bound by residues histidine 111 and histidine 115. Substrate is bound by residues 134–138 (LVSGG), aspartate 167, glycine 180, and asparagine 274. Aspartate 302 is a binding site for Fe cation.

The protein belongs to the KAE1 / TsaD family. The cofactor is Fe(2+).

Its subcellular location is the cytoplasm. The enzyme catalyses L-threonylcarbamoyladenylate + adenosine(37) in tRNA = N(6)-L-threonylcarbamoyladenosine(37) in tRNA + AMP + H(+). Its function is as follows. Required for the formation of a threonylcarbamoyl group on adenosine at position 37 (t(6)A37) in tRNAs that read codons beginning with adenine. Is involved in the transfer of the threonylcarbamoyl moiety of threonylcarbamoyl-AMP (TC-AMP) to the N6 group of A37, together with TsaE and TsaB. TsaD likely plays a direct catalytic role in this reaction. The sequence is that of tRNA N6-adenosine threonylcarbamoyltransferase from Methylobacillus flagellatus (strain ATCC 51484 / DSM 6875 / VKM B-1610 / KT).